A 66-amino-acid polypeptide reads, in one-letter code: Conotoxin mr5.2 (66 aa).

An N-terminal signal peptide occupies residues 1–19 (MRCVPVFVILLLLIASAPT). Positions 20 to 48 (VDAQLKTKDDMPLASFHANVKRTLQILRD) are excised as a propeptide. 2 positions are modified to 4-carboxyglutamate: E57 and E61. Residue N65 is modified to Asparagine amide.

Post-translationally, contains 2 disulfide bonds that can be either 'C1-C3, C2-C4' or 'C1-C4, C2-C3', since these disulfide connectivities have been observed for conotoxins with cysteine framework V (for examples, see AC P0DQQ7 and AC P81755). In terms of tissue distribution, expressed by the venom duct.

It is found in the secreted. This is Conotoxin mr5.2 from Conus marmoreus (Marble cone).